The chain runs to 372 residues: uncharacterized protein (372 aa).

The tract at residues K328 to Q353 is disordered.

Induces the SOS system when expressed in E.coli, therefore, it may play a role in DNA metabolism and/or in genome stability. This is an uncharacterized protein from Saccharomyces cerevisiae (strain ATCC 204508 / S288c) (Baker's yeast).